The sequence spans 342 residues: MTTLTITRPDDWHVHLRDGDVLADTVRDISRYNGRALIMPNTVPPVTTTEMALAYRERIMAAQPQAHFEPLMALYLTDNTSPEEIRKAKASGKVVAAKLYPAGATTNSDSGVTSAKNIYPVLQAMQEVGMLLLVHGEVTTHEVDIFDREKTFLDTVLAPIVNDFPQLKIVLEHITTADAVTFVQQAGDNVAATITAHHLLFNRNHMLVGGIRPHFYCLPILKRATHQHALVAAATSGSKKFFLGTDSAPHAKGRKEAACGCAGSYTAHAALELYAEVFEKEGKLENLEAFASFNGPDFYGLPRNQETVTLTKQAWPVAESMPFGSDIVVPIRAGENIEWTVK.

Zn(2+) contacts are provided by H13 and H15. Residues 15–17 (HLR) and N41 contribute to the substrate site. Residues K98, H135, and H173 each coordinate Zn(2+). At K98 the chain carries N6-carboxylysine. H135 serves as a coordination point for substrate. Residue L218 coordinates substrate. D246 contacts Zn(2+). The active site involves D246. 2 residues coordinate substrate: H250 and A262.

This sequence belongs to the metallo-dependent hydrolases superfamily. DHOase family. Class II DHOase subfamily. In terms of assembly, homodimer. Zn(2+) is required as a cofactor.

It carries out the reaction (S)-dihydroorotate + H2O = N-carbamoyl-L-aspartate + H(+). The protein operates within pyrimidine metabolism; UMP biosynthesis via de novo pathway; (S)-dihydroorotate from bicarbonate: step 3/3. In terms of biological role, catalyzes the reversible cyclization of carbamoyl aspartate to dihydroorotate. The protein is Dihydroorotase of Vibrio cholerae serotype O1 (strain ATCC 39315 / El Tor Inaba N16961).